The following is a 205-amino-acid chain: Glycerol-3-phosphate acyltransferase (205 aa).

5 helical membrane-spanning segments follow: residues 13–33 (LLALAALIGYLLGSIPFGLIL), 68–88 (LLLDALKGTAAVLVANALWGY), 90–110 (ASLVAGFFAFLGHLFPVWLGF), 120–140 (IGVLLGAAPLMMLAFALIWLA), and 147–167 (YSSLSALLAMLIIPVALWVLG).

It belongs to the PlsY family. As to quaternary structure, probably interacts with PlsX.

The protein resides in the cell inner membrane. It carries out the reaction an acyl phosphate + sn-glycerol 3-phosphate = a 1-acyl-sn-glycero-3-phosphate + phosphate. It functions in the pathway lipid metabolism; phospholipid metabolism. Catalyzes the transfer of an acyl group from acyl-phosphate (acyl-PO(4)) to glycerol-3-phosphate (G3P) to form lysophosphatidic acid (LPA). This enzyme utilizes acyl-phosphate as fatty acyl donor, but not acyl-CoA or acyl-ACP. This chain is Glycerol-3-phosphate acyltransferase, found in Agrobacterium fabrum (strain C58 / ATCC 33970) (Agrobacterium tumefaciens (strain C58)).